A 406-amino-acid polypeptide reads, in one-letter code: MNGFAVIPSVTTTTTSGEPIASDVARKQNLLELDREGLERFFEDVLGEKRYRAHQVMKWIHHRYVADFEQMTDVGKALRTRLQACAEVRVPRVVFDKHSADGTHKWLLAMGTDRKNAIETVYIPDKGRGTLCVSSQIGCGLNCTFCSTATQGFNRNLTTAEIIGQVWVAARHLGNVPHQQRRLTNVVMMGMGEPLMNFDNVVRAMSVMRDDLGYGLSNKRVTLSTSGLVPMIDRLSTESDVSLAVSLHAPNDKLREQLVPLNKKYPIVELMASCERYLSVNRKRDSVTFEYTLMKGVNDKQEHAHELAKLMRQFDCAMQVKGAAKVNLIPFNPFPGTCYERSTEVDIRAFQKILLDAQILAMVRRTRGDDIDAACGQLKGQVVDRTRRQAEFRRTIEDRVGRDVAA.

Catalysis depends on Glu-119, which acts as the Proton acceptor. One can recognise a Radical SAM core domain in the interval 125-370 (DKGRGTLCVS…AMVRRTRGDD (246 aa)). An intrachain disulfide couples Cys-132 to Cys-375. Residues Cys-139, Cys-143, and Cys-146 each contribute to the [4Fe-4S] cluster site. S-adenosyl-L-methionine contacts are provided by residues 192–193 (GE), Ser-224, 246–248 (SLH), and Asn-332. The active-site S-methylcysteine intermediate is Cys-375.

It belongs to the radical SAM superfamily. RlmN family. The cofactor is [4Fe-4S] cluster.

It is found in the cytoplasm. It carries out the reaction adenosine(2503) in 23S rRNA + 2 reduced [2Fe-2S]-[ferredoxin] + 2 S-adenosyl-L-methionine = 2-methyladenosine(2503) in 23S rRNA + 5'-deoxyadenosine + L-methionine + 2 oxidized [2Fe-2S]-[ferredoxin] + S-adenosyl-L-homocysteine. The catalysed reaction is adenosine(37) in tRNA + 2 reduced [2Fe-2S]-[ferredoxin] + 2 S-adenosyl-L-methionine = 2-methyladenosine(37) in tRNA + 5'-deoxyadenosine + L-methionine + 2 oxidized [2Fe-2S]-[ferredoxin] + S-adenosyl-L-homocysteine. Functionally, specifically methylates position 2 of adenine 2503 in 23S rRNA and position 2 of adenine 37 in tRNAs. m2A2503 modification seems to play a crucial role in the proofreading step occurring at the peptidyl transferase center and thus would serve to optimize ribosomal fidelity. In Xylella fastidiosa (strain Temecula1 / ATCC 700964), this protein is Dual-specificity RNA methyltransferase RlmN.